The chain runs to 189 residues: Thermostable direct hemolysin (189 aa).

Residues 1–24 (MKYQYFAKKSFLFISMLAAFKTFA) form the signal peptide. A disulfide bridge links Cys175 with Cys185.

Belongs to the TDH hemolysin family. Homodimer.

Functionally, bacterial hemolysins are exotoxins that attack blood cell membranes and cause cell rupture by mechanisms not clearly defined. The chain is Thermostable direct hemolysin (tdh) from Vibrio mimicus.